The following is a 681-amino-acid chain: uncharacterized protein (681 aa).

In the N-terminal section; belongs to the purine/pyrimidine phosphoribosyltransferase family.

This is an uncharacterized protein from Mycobacterium tuberculosis (strain CDC 1551 / Oshkosh).